We begin with the raw amino-acid sequence, 151 residues long: Ribosome maturation factor RimP (151 aa).

It belongs to the RimP family.

The protein localises to the cytoplasm. Required for maturation of 30S ribosomal subunits. The polypeptide is Ribosome maturation factor RimP (Saccharophagus degradans (strain 2-40 / ATCC 43961 / DSM 17024)).